A 253-amino-acid polypeptide reads, in one-letter code: Ubiquinone biosynthesis O-methyltransferase (253 aa).

S-adenosyl-L-methionine contacts are provided by R41, G72, D93, and M136.

The protein belongs to the methyltransferase superfamily. UbiG/COQ3 family.

The enzyme catalyses a 3-demethylubiquinol + S-adenosyl-L-methionine = a ubiquinol + S-adenosyl-L-homocysteine + H(+). The catalysed reaction is a 3-(all-trans-polyprenyl)benzene-1,2-diol + S-adenosyl-L-methionine = a 2-methoxy-6-(all-trans-polyprenyl)phenol + S-adenosyl-L-homocysteine + H(+). Its pathway is cofactor biosynthesis; ubiquinone biosynthesis. Functionally, O-methyltransferase that catalyzes the 2 O-methylation steps in the ubiquinone biosynthetic pathway. In Chelativorans sp. (strain BNC1), this protein is Ubiquinone biosynthesis O-methyltransferase.